Consider the following 305-residue polypeptide: MAVPFLQDHDTKHDLLTMSHLSLEEIEHILHDAQQFENGALWSPEEKLFVANLFFEPSTRTRVSFEVAEQRLGLHVVNVDGERSSVQKGETLYDTAKTLESIGVNALVIRHRQDRYFEELKDRINIPIINAGDGCGHHPTQSLLDLWTIQQEFGRFSNLITVISGDLRHSRVARSNAETLTRLGARVYISGPREWMEGYEGVYPYVTMDEAVELADVIMLLRVQHERHDGTVSFTQASYHEQFGLTVKREARMKPKSIVMHPAPVNRNVEIASELVECPRSRIFKQMKNGVAIRMAVLKRALTDE.

Carbamoyl phosphate contacts are provided by Arg-60 and Thr-61. Residue Lys-88 coordinates L-aspartate. Residues Arg-110, His-138, and Gln-141 each coordinate carbamoyl phosphate. The L-aspartate site is built by Arg-171 and Arg-222. Ala-263 and Pro-264 together coordinate carbamoyl phosphate.

This sequence belongs to the aspartate/ornithine carbamoyltransferase superfamily. ATCase family. As to quaternary structure, heterododecamer (2C3:3R2) of six catalytic PyrB chains organized as two trimers (C3), and six regulatory PyrI chains organized as three dimers (R2).

The catalysed reaction is carbamoyl phosphate + L-aspartate = N-carbamoyl-L-aspartate + phosphate + H(+). Its pathway is pyrimidine metabolism; UMP biosynthesis via de novo pathway; (S)-dihydroorotate from bicarbonate: step 2/3. Functionally, catalyzes the condensation of carbamoyl phosphate and aspartate to form carbamoyl aspartate and inorganic phosphate, the committed step in the de novo pyrimidine nucleotide biosynthesis pathway. This chain is Aspartate carbamoyltransferase catalytic subunit, found in Halalkalibacterium halodurans (strain ATCC BAA-125 / DSM 18197 / FERM 7344 / JCM 9153 / C-125) (Bacillus halodurans).